We begin with the raw amino-acid sequence, 49 residues long: uncharacterized protein (49 aa).

The helical transmembrane segment at 20–42 threads the bilayer; that stretch reads LFLVGLTIGKMATSRILSFLGFI.

It is found in the membrane. This is an uncharacterized protein from Dictyostelium discoideum (Social amoeba).